The chain runs to 482 residues: Probable cytosol aminopeptidase (482 aa).

Mn(2+) contacts are provided by Lys-251 and Asp-256. Lys-263 is an active-site residue. Positions 274, 333, and 335 each coordinate Mn(2+). Residue Arg-337 is part of the active site.

This sequence belongs to the peptidase M17 family. Requires Mn(2+) as cofactor.

It localises to the cytoplasm. It carries out the reaction Release of an N-terminal amino acid, Xaa-|-Yaa-, in which Xaa is preferably Leu, but may be other amino acids including Pro although not Arg or Lys, and Yaa may be Pro. Amino acid amides and methyl esters are also readily hydrolyzed, but rates on arylamides are exceedingly low.. The enzyme catalyses Release of an N-terminal amino acid, preferentially leucine, but not glutamic or aspartic acids.. In terms of biological role, presumably involved in the processing and regular turnover of intracellular proteins. Catalyzes the removal of unsubstituted N-terminal amino acids from various peptides. This chain is Probable cytosol aminopeptidase, found in Acinetobacter baumannii (strain AB307-0294).